A 649-amino-acid chain; its full sequence is Threonine--tRNA ligase (649 aa).

The TGS domain maps to 1-60 (MHVTLPDGKQLDLQPGATALDAAKAIGPRLAQDALGATANGELTDLMTPLSDGASITLIT). The segment at 248-544 (DHRKLGKELE…LIEHYAGDFP (297 aa)) is catalytic. The Zn(2+) site is built by Cys-341, His-392, and His-521.

The protein belongs to the class-II aminoacyl-tRNA synthetase family. In terms of assembly, homodimer. It depends on Zn(2+) as a cofactor.

Its subcellular location is the cytoplasm. The enzyme catalyses tRNA(Thr) + L-threonine + ATP = L-threonyl-tRNA(Thr) + AMP + diphosphate + H(+). Functionally, catalyzes the attachment of threonine to tRNA(Thr) in a two-step reaction: L-threonine is first activated by ATP to form Thr-AMP and then transferred to the acceptor end of tRNA(Thr). Also edits incorrectly charged L-seryl-tRNA(Thr). This chain is Threonine--tRNA ligase, found in Deinococcus radiodurans (strain ATCC 13939 / DSM 20539 / JCM 16871 / CCUG 27074 / LMG 4051 / NBRC 15346 / NCIMB 9279 / VKM B-1422 / R1).